The following is a 218-amino-acid chain: Putative inactive cathepsin L-like protein CTSL3P (218 aa).

2 disordered regions span residues 144-173 (GDWKVQGHRGASGESLLASGESQQSPEVAQ) and 195-218 (GDEDHDEDKWPHDMRNHLAGEAQV). Basic and acidic residues predominate over residues 201–212 (EDKWPHDMRNHL).

This sequence belongs to the peptidase C1 family.

The sequence is that of Putative inactive cathepsin L-like protein CTSL3P (CTSL3P) from Homo sapiens (Human).